The chain runs to 76 residues: Sec-independent protein translocase protein TatA (76 aa).

A helical membrane pass occupies residues 1–21; it reads MGGLSIWHWLIVLLIVALVFG. The interval 40 to 76 is disordered; it reads KDGMKEGETPADAQQLPRSGAVDVNAKETTRSDSNKA. Residues 64–76 show a composition bias toward basic and acidic residues; the sequence is NAKETTRSDSNKA.

This sequence belongs to the TatA/E family. In terms of assembly, the Tat system comprises two distinct complexes: a TatABC complex, containing multiple copies of TatA, TatB and TatC subunits, and a separate TatA complex, containing only TatA subunits. Substrates initially bind to the TatABC complex, which probably triggers association of the separate TatA complex to form the active translocon.

It localises to the cell inner membrane. Functionally, part of the twin-arginine translocation (Tat) system that transports large folded proteins containing a characteristic twin-arginine motif in their signal peptide across membranes. TatA could form the protein-conducting channel of the Tat system. The protein is Sec-independent protein translocase protein TatA of Burkholderia cenocepacia (strain HI2424).